Consider the following 49-residue polypeptide: MAQRKIALACSVCGSRNYTITASATRTKRLEVMKFCKFCGKHTLHRETR.

The protein belongs to the bacterial ribosomal protein bL33 family.

This Levilactobacillus brevis (strain ATCC 367 / BCRC 12310 / CIP 105137 / JCM 1170 / LMG 11437 / NCIMB 947 / NCTC 947) (Lactobacillus brevis) protein is Large ribosomal subunit protein bL33A.